Consider the following 206-residue polypeptide: ATP phosphoribosyltransferase (206 aa).

It belongs to the ATP phosphoribosyltransferase family. Short subfamily. In terms of assembly, heteromultimer composed of HisG and HisZ subunits.

The protein resides in the cytoplasm. The catalysed reaction is 1-(5-phospho-beta-D-ribosyl)-ATP + diphosphate = 5-phospho-alpha-D-ribose 1-diphosphate + ATP. The protein operates within amino-acid biosynthesis; L-histidine biosynthesis; L-histidine from 5-phospho-alpha-D-ribose 1-diphosphate: step 1/9. Catalyzes the condensation of ATP and 5-phosphoribose 1-diphosphate to form N'-(5'-phosphoribosyl)-ATP (PR-ATP). Has a crucial role in the pathway because the rate of histidine biosynthesis seems to be controlled primarily by regulation of HisG enzymatic activity. The chain is ATP phosphoribosyltransferase from Geobacillus sp. (strain WCH70).